We begin with the raw amino-acid sequence, 99 residues long: Bombyxin A-1 homolog (99 aa).

The first 19 residues, 1 to 19 (MKTQVLFLVFALAAVMVSG), serve as a signal peptide directing secretion. 3 cysteine pairs are disulfide-bonded: Cys-27–Cys-86, Cys-39–Cys-99, and Cys-85–Cys-90. The propeptide at 48–76 (TPYISPENEGYGWRWLEPQRARQLDGARG) is c peptide like.

It belongs to the insulin family. As to quaternary structure, heterodimer of a B chain and an A chain linked by two disulfide bonds.

It is found in the secreted. Its function is as follows. Brain peptide responsible for activation of prothoracic glands to produce ecdysone in insects. The polypeptide is Bombyxin A-1 homolog (SBXA1) (Samia cynthia (Ailanthus silkmoth)).